Consider the following 371-residue polypeptide: Transcriptional regulator of yeast form adherence 2 (371 aa).

A C3H1-type 1 zinc finger spans residues 16–44 (RNPAVLCSFYSKIGACRHGEKCSKKHLKP). Polar residues predominate over residues 94–107 (TVSQIDDSPHSNSG). The tract at residues 94-194 (TVSQIDDSPH…NIEDAKLEDT (101 aa)) is disordered. Residues 115–124 (VETQEVETEN) are compositionally biased toward acidic residues. The segment covering 132–194 (GDVKIDHNED…NIEDAKLEDT (63 aa)) has biased composition (basic and acidic residues). The RRM domain occupies 192-279 (EDTEKDKLPE…KPVYSDLSPV (88 aa)). A C3H1-type 2 zinc finger spans residues 281–309 (DFNDACCEEYRDYHDCQRGAMCNYMHVRL). Positions 337 to 371 (ELPGDIRSSSSTNDDETNGNENGISSTMAVLEQLS) are disordered. The span at 355–371 (GNENGISSTMAVLEQLS) shows a compositional bias: polar residues.

Its subcellular location is the nucleus. Its function is as follows. Transcription factor required for yeast cell adherence to silicone substrate. The sequence is that of Transcriptional regulator of yeast form adherence 2 (TRY2) from Candida albicans (strain SC5314 / ATCC MYA-2876) (Yeast).